Consider the following 343-residue polypeptide: General stress protein 30 (343 aa).

It belongs to the polysaccharide pyruvyl transferase family.

The chain is General stress protein 30 (yxaB) from Bacillus subtilis (strain 168).